Reading from the N-terminus, the 668-residue chain is UvrABC system protein B (668 aa).

Residues 25-413 (NGINTGLQHQ…QNTVQQVIRP (389 aa)) enclose the Helicase ATP-binding domain. 38–45 (GVTGSGKT) provides a ligand contact to ATP. The short motif at 91–114 (YYDYYQPEAYIAASDTYIEKDSSV) is the Beta-hairpin element. The Helicase C-terminal domain occupies 429-595 (QVEDALSEIN…TIIKNIDDML (167 aa)). Residues 629–664 (TKVIKALEKRMRAYAKELEFEKATTIRDKITEVKQK) enclose the UVR domain.

It belongs to the UvrB family. In terms of assembly, forms a heterotetramer with UvrA during the search for lesions. Interacts with UvrC in an incision complex.

Its subcellular location is the cytoplasm. The UvrABC repair system catalyzes the recognition and processing of DNA lesions. A damage recognition complex composed of 2 UvrA and 2 UvrB subunits scans DNA for abnormalities. Upon binding of the UvrA(2)B(2) complex to a putative damaged site, the DNA wraps around one UvrB monomer. DNA wrap is dependent on ATP binding by UvrB and probably causes local melting of the DNA helix, facilitating insertion of UvrB beta-hairpin between the DNA strands. Then UvrB probes one DNA strand for the presence of a lesion. If a lesion is found the UvrA subunits dissociate and the UvrB-DNA preincision complex is formed. This complex is subsequently bound by UvrC and the second UvrB is released. If no lesion is found, the DNA wraps around the other UvrB subunit that will check the other stand for damage. The sequence is that of UvrABC system protein B from Francisella tularensis subsp. tularensis (strain SCHU S4 / Schu 4).